The primary structure comprises 178 residues: Large ribosomal subunit protein bL25 (178 aa).

Belongs to the bacterial ribosomal protein bL25 family. CTC subfamily. In terms of assembly, part of the 50S ribosomal subunit; part of the 5S rRNA/L5/L18/L25 subcomplex. Contacts the 5S rRNA. Binds to the 5S rRNA independently of L5 and L18.

In terms of biological role, this is one of the proteins that binds to the 5S RNA in the ribosome where it forms part of the central protuberance. This chain is Large ribosomal subunit protein bL25, found in Helicobacter pylori (strain G27).